Consider the following 61-residue polypeptide: Small ribosomal subunit protein uS14 (61 aa).

Zn(2+) is bound by residues Cys-24, Cys-27, Cys-40, and Cys-43.

Belongs to the universal ribosomal protein uS14 family. Zinc-binding uS14 subfamily. Part of the 30S ribosomal subunit. Contacts proteins S3 and S10. Zn(2+) is required as a cofactor.

Binds 16S rRNA, required for the assembly of 30S particles and may also be responsible for determining the conformation of the 16S rRNA at the A site. In Clostridioides difficile (strain 630) (Peptoclostridium difficile), this protein is Small ribosomal subunit protein uS14.